A 769-amino-acid polypeptide reads, in one-letter code: Serine protease HtrA-like (769 aa).

A compositionally biased stretch (basic residues) spans 1–20 (MDIGKKHVIPKSQYRRKRRE). Residues 1–390 (MDIGKKHVIP…ATSKLNKGRA (390 aa)) form a disordered region. 2 stretches are compositionally biased toward basic and acidic residues: residues 21-64 (FFHN…ERFK) and 71-108 (LEQR…DVSK). A compositionally biased stretch (polar residues) spans 126-137 (YEQNSEATLSTK). Positions 138–186 (STDKVESTEMRKLSSDKNKVGHEEQHVLSKPSEHDKETRIDSESSRTDS) are enriched in basic and acidic residues. Residues 247 to 262 (QQSQNEQTKTYTYGDS) show a composition bias toward polar residues. Basic and acidic residues-rich tracts occupy residues 264-296 (QNDK…HIVD) and 310-330 (KTDD…HKQN). Positions 331–347 (ADSSETVGYQSQSTASH) are enriched in polar residues. Over residues 348–364 (RSTEKRNISINDHDKLN) the composition is skewed to basic and acidic residues. The span at 365 to 390 (GQKTNTKTSANNNQKKATSKLNKGRA) shows a compositional bias: polar residues. The helical transmembrane segment at 410-430 (LVILMGIIILIVILNAIFNNV) threads the bilayer. Catalysis depends on charge relay system residues His-504, Asp-534, and Ser-619. The region spanning 680–733 (IASLNSFERQAVKLPGKVKNGVVVDQVDNNGLADQSGLKKGDVITELDGKLLED) is the PDZ domain.

It belongs to the peptidase S1C family.

It localises to the cell membrane. The polypeptide is Serine protease HtrA-like (Staphylococcus aureus (strain COL)).